The sequence spans 98 residues: Large ribosomal subunit protein uL23 (98 aa).

It belongs to the universal ribosomal protein uL23 family. Part of the 50S ribosomal subunit. Contacts protein L29, and trigger factor when it is bound to the ribosome.

In terms of biological role, one of the early assembly proteins it binds 23S rRNA. One of the proteins that surrounds the polypeptide exit tunnel on the outside of the ribosome. Forms the main docking site for trigger factor binding to the ribosome. In Jannaschia sp. (strain CCS1), this protein is Large ribosomal subunit protein uL23.